A 367-amino-acid polypeptide reads, in one-letter code: Histidinol-phosphate aminotransferase 1 (367 aa).

An N6-(pyridoxal phosphate)lysine modification is found at Lys226.

The protein belongs to the class-II pyridoxal-phosphate-dependent aminotransferase family. Histidinol-phosphate aminotransferase subfamily. As to quaternary structure, homodimer. Pyridoxal 5'-phosphate is required as a cofactor.

The catalysed reaction is L-histidinol phosphate + 2-oxoglutarate = 3-(imidazol-4-yl)-2-oxopropyl phosphate + L-glutamate. The protein operates within amino-acid biosynthesis; L-histidine biosynthesis; L-histidine from 5-phospho-alpha-D-ribose 1-diphosphate: step 7/9. The protein is Histidinol-phosphate aminotransferase 1 (hisC1) of Haemophilus influenzae (strain ATCC 51907 / DSM 11121 / KW20 / Rd).